A 309-amino-acid polypeptide reads, in one-letter code: Ribonuclease Z (309 aa).

The Zn(2+) site is built by His63, His65, Asp67, His68, His141, Asp212, and His270. Asp67 (proton acceptor) is an active-site residue.

It belongs to the RNase Z family. As to quaternary structure, homodimer. The cofactor is Zn(2+).

It catalyses the reaction Endonucleolytic cleavage of RNA, removing extra 3' nucleotides from tRNA precursor, generating 3' termini of tRNAs. A 3'-hydroxy group is left at the tRNA terminus and a 5'-phosphoryl group is left at the trailer molecule.. In terms of biological role, zinc phosphodiesterase, which displays some tRNA 3'-processing endonuclease activity. Probably involved in tRNA maturation, by removing a 3'-trailer from precursor tRNA. This is Ribonuclease Z from Lactobacillus delbrueckii subsp. bulgaricus (strain ATCC 11842 / DSM 20081 / BCRC 10696 / JCM 1002 / NBRC 13953 / NCIMB 11778 / NCTC 12712 / WDCM 00102 / Lb 14).